The following is a 378-amino-acid chain: Anhydro-N-acetylmuramic acid kinase (378 aa).

Position 22–29 (22–29) interacts with ATP; sequence GTSLDGAD.

It belongs to the anhydro-N-acetylmuramic acid kinase family.

The enzyme catalyses 1,6-anhydro-N-acetyl-beta-muramate + ATP + H2O = N-acetyl-D-muramate 6-phosphate + ADP + H(+). Its pathway is amino-sugar metabolism; 1,6-anhydro-N-acetylmuramate degradation. It functions in the pathway cell wall biogenesis; peptidoglycan recycling. Catalyzes the specific phosphorylation of 1,6-anhydro-N-acetylmuramic acid (anhMurNAc) with the simultaneous cleavage of the 1,6-anhydro ring, generating MurNAc-6-P. Is required for the utilization of anhMurNAc either imported from the medium or derived from its own cell wall murein, and thus plays a role in cell wall recycling. This Bordetella petrii (strain ATCC BAA-461 / DSM 12804 / CCUG 43448) protein is Anhydro-N-acetylmuramic acid kinase.